A 226-amino-acid polypeptide reads, in one-letter code: Glutathione peroxidase 3 (226 aa).

The N-terminal stretch at Met1–Gly24 is a signal peptide. Sec73 is an active-site residue. Sec73 is a non-standard amino acid (selenocysteine).

The protein belongs to the glutathione peroxidase family. In terms of assembly, homotetramer. As to expression, secreted in plasma.

It localises to the secreted. The catalysed reaction is 2 glutathione + H2O2 = glutathione disulfide + 2 H2O. It catalyses the reaction tert-butyl hydroperoxide + 2 glutathione = tert-butanol + glutathione disulfide + H2O. In terms of biological role, protects cells and enzymes from oxidative damage, by catalyzing the reduction of hydrogen peroxide, lipid peroxides and organic hydroperoxide, by glutathione. The protein is Glutathione peroxidase 3 of Rattus norvegicus (Rat).